The sequence spans 274 residues: Undecaprenyl-diphosphatase (274 aa).

7 consecutive transmembrane segments (helical) span residues Pro4–Ile24, Asp41–Trp61, Phe83–Ser103, Leu108–Trp128, Ala184–Leu204, Val218–Ile238, and Phe246–Leu266.

This sequence belongs to the UppP family.

The protein resides in the cell inner membrane. The enzyme catalyses di-trans,octa-cis-undecaprenyl diphosphate + H2O = di-trans,octa-cis-undecaprenyl phosphate + phosphate + H(+). Its function is as follows. Catalyzes the dephosphorylation of undecaprenyl diphosphate (UPP). Confers resistance to bacitracin. The sequence is that of Undecaprenyl-diphosphatase from Aromatoleum aromaticum (strain DSM 19018 / LMG 30748 / EbN1) (Azoarcus sp. (strain EbN1)).